Reading from the N-terminus, the 217-residue chain is Small ribosomal subunit protein uS3c (217 aa).

One can recognise a KH type-2 domain in the interval 43-117 (IKNYVQKNKR…KLNIAITRIA (75 aa)).

Belongs to the universal ribosomal protein uS3 family. As to quaternary structure, part of the 30S ribosomal subunit.

The protein localises to the plastid. Its subcellular location is the chloroplast. In Platanus occidentalis (Sycamore), this protein is Small ribosomal subunit protein uS3c (rps3).